A 306-amino-acid chain; its full sequence is Ornithine carbamoyltransferase (306 aa).

Residues 50–53, Gln77, Arg101, and 128–131 each bind carbamoyl phosphate; these read STRT and HPCQ. Residues Asn160, Asp224, and 228–229 contribute to the L-ornithine site; that span reads SM. Carbamoyl phosphate is bound by residues 261 to 262 and Arg289; that span reads CL.

The protein belongs to the aspartate/ornithine carbamoyltransferase superfamily. OTCase family.

The protein resides in the cytoplasm. The enzyme catalyses carbamoyl phosphate + L-ornithine = L-citrulline + phosphate + H(+). The protein operates within amino-acid biosynthesis; L-arginine biosynthesis; L-arginine from L-ornithine and carbamoyl phosphate: step 1/3. In terms of biological role, reversibly catalyzes the transfer of the carbamoyl group from carbamoyl phosphate (CP) to the N(epsilon) atom of ornithine (ORN) to produce L-citrulline. The protein is Ornithine carbamoyltransferase of Aquifex aeolicus (strain VF5).